The following is a 297-amino-acid chain: ER membrane protein complex subunit 2-A (297 aa).

3 TPR repeats span residues 87-120 (HRVK…DPTN), 155-188 (QEAW…NPHN), and 192-225 (YQQF…NNHN).

Belongs to the EMC2 family. In terms of assembly, component of the ER membrane protein complex (EMC).

Its subcellular location is the endoplasmic reticulum membrane. In terms of biological role, part of the endoplasmic reticulum membrane protein complex (EMC) that enables the energy-independent insertion into endoplasmic reticulum membranes of newly synthesized membrane proteins. Preferentially accommodates proteins with transmembrane domains that are weakly hydrophobic or contain destabilizing features such as charged and aromatic residues. Involved in the cotranslational insertion of multi-pass membrane proteins in which stop-transfer membrane-anchor sequences become ER membrane spanning helices. It is also required for the post-translational insertion of tail-anchored/TA proteins in endoplasmic reticulum membranes. By mediating the proper cotranslational insertion of N-terminal transmembrane domains in an N-exo topology, with translocated N-terminus in the lumen of the ER, controls the topology of multi-pass membrane proteins. By regulating the insertion of various proteins in membranes, it is indirectly involved in many cellular processes. This chain is ER membrane protein complex subunit 2-A (emc2-a), found in Xenopus laevis (African clawed frog).